Here is a 519-residue protein sequence, read N- to C-terminus: Ribonuclease Y (519 aa).

Residues 3–23 (LIEIVLLLVGMAVGAATGFIL) traverse the membrane as a helical segment. Residues 209-272 (TVTAVSLPSE…QIAKMALERL (64 aa)) form the KH domain. The HD domain maps to 335–428 (VLQHSMEVAS…VQAADSLSGA (94 aa)).

This sequence belongs to the RNase Y family.

Its subcellular location is the cell membrane. Functionally, endoribonuclease that initiates mRNA decay. The chain is Ribonuclease Y from Oleidesulfovibrio alaskensis (strain ATCC BAA-1058 / DSM 17464 / G20) (Desulfovibrio alaskensis).